We begin with the raw amino-acid sequence, 859 residues long: Ubiquitin carboxyl-terminal hydrolase 23 (859 aa).

Residues 1 to 24 (MEVATSSTEITIQTDRDPSSNNNG) show a composition bias toward polar residues. A disordered region spans residues 1–26 (MEVATSSTEITIQTDRDPSSNNNGSC). The USP domain occupies 107 to 410 (AGLQNLGNTC…KAYMLFYVRD (304 aa)). Catalysis depends on cysteine 116, which acts as the Nucleophile. Residue histidine 369 is the Proton acceptor of the active site. Disordered regions lie at residues 722–749 (MISS…ASQN) and 822–859 (EESY…AYRI).

It belongs to the peptidase C19 family.

The enzyme catalyses Thiol-dependent hydrolysis of ester, thioester, amide, peptide and isopeptide bonds formed by the C-terminal Gly of ubiquitin (a 76-residue protein attached to proteins as an intracellular targeting signal).. Its function is as follows. Recognizes and hydrolyzes the peptide bond at the C-terminal Gly of ubiquitin. Involved in the processing of poly-ubiquitin precursors as well as that of ubiquitinated proteins. This Arabidopsis thaliana (Mouse-ear cress) protein is Ubiquitin carboxyl-terminal hydrolase 23 (UBP23).